The primary structure comprises 427 residues: Serine--tRNA ligase (427 aa).

231-233 contacts L-serine; it reads TAE. An ATP-binding site is contributed by 262 to 264; that stretch reads RSE. Glutamate 285 is a binding site for L-serine. 349–352 serves as a coordination point for ATP; sequence EISS. Position 385 (serine 385) interacts with L-serine.

It belongs to the class-II aminoacyl-tRNA synthetase family. Type-1 seryl-tRNA synthetase subfamily. As to quaternary structure, homodimer. The tRNA molecule binds across the dimer.

It is found in the cytoplasm. The catalysed reaction is tRNA(Ser) + L-serine + ATP = L-seryl-tRNA(Ser) + AMP + diphosphate + H(+). It carries out the reaction tRNA(Sec) + L-serine + ATP = L-seryl-tRNA(Sec) + AMP + diphosphate + H(+). It functions in the pathway aminoacyl-tRNA biosynthesis; selenocysteinyl-tRNA(Sec) biosynthesis; L-seryl-tRNA(Sec) from L-serine and tRNA(Sec): step 1/1. Catalyzes the attachment of serine to tRNA(Ser). Is also able to aminoacylate tRNA(Sec) with serine, to form the misacylated tRNA L-seryl-tRNA(Sec), which will be further converted into selenocysteinyl-tRNA(Sec). The sequence is that of Serine--tRNA ligase from Sinorhizobium medicae (strain WSM419) (Ensifer medicae).